We begin with the raw amino-acid sequence, 437 residues long: Serine--tRNA ligase (437 aa).

Residue 244–246 (TAE) participates in L-serine binding. 275 to 277 (RSE) is an ATP binding site. Glu298 is a binding site for L-serine. 362-365 (EISS) contacts ATP. Position 397 (Ser397) interacts with L-serine.

It belongs to the class-II aminoacyl-tRNA synthetase family. Type-1 seryl-tRNA synthetase subfamily. In terms of assembly, homodimer. The tRNA molecule binds across the dimer.

It is found in the cytoplasm. The catalysed reaction is tRNA(Ser) + L-serine + ATP = L-seryl-tRNA(Ser) + AMP + diphosphate + H(+). The enzyme catalyses tRNA(Sec) + L-serine + ATP = L-seryl-tRNA(Sec) + AMP + diphosphate + H(+). It functions in the pathway aminoacyl-tRNA biosynthesis; selenocysteinyl-tRNA(Sec) biosynthesis; L-seryl-tRNA(Sec) from L-serine and tRNA(Sec): step 1/1. In terms of biological role, catalyzes the attachment of serine to tRNA(Ser). Is also able to aminoacylate tRNA(Sec) with serine, to form the misacylated tRNA L-seryl-tRNA(Sec), which will be further converted into selenocysteinyl-tRNA(Sec). In Nitrosomonas eutropha (strain DSM 101675 / C91 / Nm57), this protein is Serine--tRNA ligase.